A 359-amino-acid chain; its full sequence is 3-dehydroquinate synthase (359 aa).

NAD(+) is bound by residues Asp-71 to Lys-76, Gly-105 to Asp-109, Thr-129 to Thr-130, Lys-142, Lys-151, and Thr-169 to Thr-172. Glu-184, His-247, and His-264 together coordinate Zn(2+).

This sequence belongs to the sugar phosphate cyclases superfamily. Dehydroquinate synthase family. Co(2+) is required as a cofactor. It depends on Zn(2+) as a cofactor. Requires NAD(+) as cofactor.

The protein localises to the cytoplasm. The enzyme catalyses 7-phospho-2-dehydro-3-deoxy-D-arabino-heptonate = 3-dehydroquinate + phosphate. The protein operates within metabolic intermediate biosynthesis; chorismate biosynthesis; chorismate from D-erythrose 4-phosphate and phosphoenolpyruvate: step 2/7. Its function is as follows. Catalyzes the conversion of 3-deoxy-D-arabino-heptulosonate 7-phosphate (DAHP) to dehydroquinate (DHQ). This is 3-dehydroquinate synthase from Neisseria meningitidis serogroup C (strain 053442).